Here is a 493-residue protein sequence, read N- to C-terminus: Putative trans-acting regulator SP_1800 (493 aa).

Belongs to the AtxA/AcpA family.

This Streptococcus pneumoniae serotype 4 (strain ATCC BAA-334 / TIGR4) protein is Putative trans-acting regulator SP_1800.